Here is a 394-residue protein sequence, read N- to C-terminus: MSRVVLAYSGGLDTSVCIELLRERYGYDEVITVTADVGQPEEELREAEEKARKLADEHFTVDCVDEFVCEYCWRAVKANATYEGYPLSTALARPLIAQKVLEVARDVDADAVAHGCTGKGNDQFRFESYLRAHGGEEFEIVAPVRDLNLTRDEEIAYAEERGIPVPVDVDSPYSVDENLWGRSIEGGVLEDPSEEPPEEVFEWTVSPAEAPDEPEVVEIEFEDGVPVEVDGRDDPVEIVRYLNETAGEHGVGRIDIIEDRVIGLKSREVYEAPAAVTLLEAHRALEAFTLTRRELSLKASLEEEWARLVYDGLWFNPLREHLEAFFDSTQRHVEGTVRVKLFKGSATVISRESPRALYEEELISYEEKQFDQRTAEGAVKLHGLQERLALRRRG.

Residues 7 to 15 (AYSGGLDTS) and Ala-35 each bind ATP. Position 85 (Tyr-85) interacts with L-citrulline. Residue Gly-115 participates in ATP binding. 3 residues coordinate L-aspartate: Thr-117, Asn-121, and Asp-122. Asn-121 is a binding site for L-citrulline. Residues Arg-125, Ser-174, Ser-183, Glu-258, and Tyr-270 each coordinate L-citrulline.

This sequence belongs to the argininosuccinate synthase family. Type 1 subfamily. In terms of assembly, homotetramer.

The protein localises to the cytoplasm. The enzyme catalyses L-citrulline + L-aspartate + ATP = 2-(N(omega)-L-arginino)succinate + AMP + diphosphate + H(+). It participates in amino-acid biosynthesis; L-arginine biosynthesis; L-arginine from L-ornithine and carbamoyl phosphate: step 2/3. This chain is Argininosuccinate synthase, found in Methanopyrus kandleri (strain AV19 / DSM 6324 / JCM 9639 / NBRC 100938).